The following is a 360-amino-acid chain: Phosphoserine aminotransferase (360 aa).

R42 is an L-glutamate binding site. Residues 76-77 (AR), W102, T153, D172, and Q195 contribute to the pyridoxal 5'-phosphate site. Position 196 is an N6-(pyridoxal phosphate)lysine (K196). Residue 237 to 238 (NT) coordinates pyridoxal 5'-phosphate.

It belongs to the class-V pyridoxal-phosphate-dependent aminotransferase family. SerC subfamily. Homodimer. Pyridoxal 5'-phosphate serves as cofactor.

The protein resides in the cytoplasm. The enzyme catalyses O-phospho-L-serine + 2-oxoglutarate = 3-phosphooxypyruvate + L-glutamate. It catalyses the reaction 4-(phosphooxy)-L-threonine + 2-oxoglutarate = (R)-3-hydroxy-2-oxo-4-phosphooxybutanoate + L-glutamate. Its pathway is amino-acid biosynthesis; L-serine biosynthesis; L-serine from 3-phospho-D-glycerate: step 2/3. It participates in cofactor biosynthesis; pyridoxine 5'-phosphate biosynthesis; pyridoxine 5'-phosphate from D-erythrose 4-phosphate: step 3/5. Catalyzes the reversible conversion of 3-phosphohydroxypyruvate to phosphoserine and of 3-hydroxy-2-oxo-4-phosphonooxybutanoate to phosphohydroxythreonine. In Photobacterium profundum (strain SS9), this protein is Phosphoserine aminotransferase.